Here is a 248-residue protein sequence, read N- to C-terminus: Mannose-binding protein C (248 aa).

The N-terminal stretch at 1–20 is a signal peptide; it reads MSLFPSLPLLLLSMVAASYS. The Collagen-like domain maps to 42–99; that stretch reads GINGFPGKDGRDGTKGEKGEPGQGLRGLQGPPGKLGPPGNPGPSGSPGPKGQKGDPGK. The segment at 43–113 is disordered; it reads INGFPGKDGR…DSSLAASERK (71 aa). Pro47 is modified (hydroxyproline). Residues 49-61 show a composition bias toward basic and acidic residues; the sequence is KDGRDGTKGEKGE. Hydroxyproline occurs at positions 73, 79, 82, and 88. Positions 75–87 are enriched in pro residues; sequence KLGPPGNPGPSGS. Residues 93-102 show a composition bias toward basic and acidic residues; that stretch reads QKGDPGKSPD. Residues 112 to 130 adopt a coiled-coil conformation; the sequence is RKALQTEMARIKKWLTFSL. The 112-residue stretch at 134-245 folds into the C-type lectin domain; that stretch reads VGNKFFLTNG…CSTSHLAVCE (112 aa). Cystine bridges form between Cys155–Cys244 and Cys222–Cys236.

Oligomeric complex of 3 or more homotrimers. Interacts with MASP1 and MASP2. Interacts with MEP1A and MEP1B and may inhibit their catalytic activity. Interacts with CR1 (via Sushi 24 and Sushi 25 domains). In terms of assembly, (Microbial infection) Interacts with SARS coronavirus-2/SARS-CoV-2 Spike glycoprotein homotrimer; the interaction is calcium-dependent and modulated by Spike glycoprotein glycosylation state. Plasma protein produced mainly in the liver.

Its subcellular location is the secreted. Calcium-dependent lectin involved in innate immune defense. Binds mannose, fucose and N-acetylglucosamine on different microorganisms and activates the lectin complement pathway. Binds to late apoptotic cells, as well as to apoptotic blebs and to necrotic cells, but not to early apoptotic cells, facilitating their uptake by macrophages. May bind DNA. Upon SARS coronavirus-2/SARS-CoV-2 infection, activates the complement lectin pathway which leads to the inhibition SARS-CoV-2 infection and a reduction of the induced inflammatory response. The protein is Mannose-binding protein C of Homo sapiens (Human).